The chain runs to 98 residues: MASKASGGSTRNGRDSISKRLGVKRYDGQFVKAGNIIVRQRGTRIYPGKNVGMGSDYTLFALKDGYVYFETRRKKKFVSVLSPEEWEKVMAQKNGKVH.

The segment covering 1–11 (MASKASGGSTR) has biased composition (polar residues). Residues 1-20 (MASKASGGSTRNGRDSISKR) are disordered.

It belongs to the bacterial ribosomal protein bL27 family.

This is Large ribosomal subunit protein bL27 from Aquifex aeolicus (strain VF5).